Here is a 652-residue protein sequence, read N- to C-terminus: Protein high chlorophyll fluorescent 107 (652 aa).

2 disordered regions span residues 1 to 21 (MHFFFVPNSSSSSPSPANTSS) and 78 to 121 (VFSP…EGKK). The transit peptide at 1–68 (MHFFFVPNSS…TFSSKNTYLY (68 aa)) directs the protein to the chloroplast. Positions 105–121 (PLLENSDKESSEEEGKK) are enriched in basic and acidic residues. 12 TPR repeats span residues 168–201 (LDLSLYKAKVLARNFRYKDAEKILEKCIAYWPED), 202–235 (GRPYVALGKILSKQSKLAEARILYEKGCQSTQGE), 237–270 (SYIWQCWAVLENRLGNVRRARELFDAATVADKKH), 271–304 (VAAWHGWANLEIKQGNISKARNLLAKGLKFCGRN), 305–338 (EYIYQTLALLEAKAGRYEQARYLFKQATICNSRS), 339–372 (CASWLAWAQLEIQQERYPAARKLFEKAVQASPKN), 374–406 (FAWHVWGVFEAGVGNVERGRKLLKIGHALNPRD), 407–440 (PVLLQSLGLLEYKHSSANLARALLRRASELDPRH), 441–474 (QPVWIAWGWMEWKEGNTTTARELYQRALSIDANT), 478–511 (SRCLQAWGVLEQRAGNLSAARRLFRSSLNINSQS), 543–576 (TEVVDDASWVTGFLDIIDPALDTVKRLLNFGQNN), and 598–631 (QQPESSAGREDIETGSGFNLDVFLRSKLSLDPLK). Residues 585–610 (LRNMNRTKDSQSNQQPESSAGREDIE) are disordered.

As to quaternary structure, may form homomultimers. Part of a multi-subunit complex in the range of 60-190 and 600-800 kDa in chloroplast membranes.

The protein resides in the plastid. Its subcellular location is the chloroplast. The protein localises to the chloroplast membrane. It is found in the chloroplast stroma. Its function is as follows. Involved, directly or indirectly, in the processing of chloroplast encoded mRNAs. Exhibits sequence-specific RNA binding and RNA remodeling activities, probably leading to the activation of translation of the target gene cluster psbB-psbT-psbH-petB-petD. Blocks 5'-3' and 3'-5' exoribonucleases (e.g. polynucleotide phosphorylase (PNPase), RNase R) in vitro. Necessary for intercistronic RNA processing of the psbH 5' untranslated region or the stabilization of 5' processed psbH RNAs. Also required for the synthesis of psbB. This chain is Protein high chlorophyll fluorescent 107, found in Arabidopsis thaliana (Mouse-ear cress).